The sequence spans 435 residues: MSKPEETSDPNPTGPDPSRSSSDEVTVTVADRAPSDLNHVSEELSDQLRNVGLDDSAKELSVPISVPQGNVETDSRALFGSDQKEEEEGSEKRMMMVYPVRPDSEDCSFYMRTGSCKYGSSCKFNHPVRRKLQIGRERVRERDEDVENPKLMECKYYFRTGGCKYGESCRFSHMKEHNSPASVPELNFLGLPIRPGEKECPFYMRNGSCKFGSDCKFNHPDPTAIGGVDSPLYRGNNGGSFSPKAPSQASSTSWSSTRHMNGTGTAPFIPSMFPHSRGVTPQASDWNGYQASSAYPPERSPLAPSSYQVNNSLAETSSFSQYQHQMSVEEFPERPDQPECTYYLKTGDCKFKYKCKYHHPKNRLPKQAAFSFNDKGLPLRPDQSMCTHYSRYGICKFGPACRFDHSIPPTFSPSSSQTVEARQVGANGNEDDSWH.

Residues 1–91 (MSKPEETSDP…DQKEEEEGSE (91 aa)) are disordered. 3 consecutive C3H1-type zinc fingers follow at residues 101–129 (RPDS…HPVR), 148–176 (NPKL…HMKE), and 194–222 (RPGE…HPDP). The tract at residues 235-274 (GNNGGSFSPKAPSQASSTSWSSTRHMNGTGTAPFIPSMFP) is disordered. Residues 247-256 (SQASSTSWSS) show a composition bias toward low complexity. C3H1-type zinc fingers lie at residues 334-362 (RPDQ…HPKN) and 380-408 (RPDQ…HSIP). A disordered region spans residues 412–435 (SPSSSQTVEARQVGANGNEDDSWH).

It is found in the nucleus. This is Zinc finger CCCH domain-containing protein 67 from Arabidopsis thaliana (Mouse-ear cress).